The sequence spans 90 residues: Conotoxin Mr22.1 (90 aa).

The signal sequence occupies residues 1–18; sequence MMTRVFFAMFFLMALTEG. Residues 19-49 constitute a propeptide that is removed on maturation; it reads WPRLYDSDCVRGRNMHITCFKDQTCGLTVKR. Trp75 carries the 6'-bromotryptophan modification.

This sequence belongs to the E superfamily. Contains 4 disulfide bonds. Expressed by the venom duct.

It localises to the secreted. The chain is Conotoxin Mr22.1 from Conus marmoreus (Marble cone).